Consider the following 290-residue polypeptide: Small ribosomal subunit biogenesis GTPase RsgA (290 aa).

The region spanning 61 to 218 (SSELLRPAVA…IVDTPGFSTL (158 aa)) is the CP-type G domain. Residues 110–113 (NKVD) and 161–169 (GPSGAGKST) contribute to the GTP site. Zn(2+)-binding residues include Cys-243, Cys-248, His-250, and Cys-256.

The protein belongs to the TRAFAC class YlqF/YawG GTPase family. RsgA subfamily. As to quaternary structure, monomer. Associates with 30S ribosomal subunit, binds 16S rRNA. Zn(2+) is required as a cofactor.

The protein resides in the cytoplasm. In terms of biological role, one of several proteins that assist in the late maturation steps of the functional core of the 30S ribosomal subunit. Helps release RbfA from mature subunits. May play a role in the assembly of ribosomal proteins into the subunit. Circularly permuted GTPase that catalyzes slow GTP hydrolysis, GTPase activity is stimulated by the 30S ribosomal subunit. The sequence is that of Small ribosomal subunit biogenesis GTPase RsgA from Clostridium botulinum (strain Eklund 17B / Type B).